A 342-amino-acid chain; its full sequence is S-methyl-5'-thioadenosine phosphorylase (342 aa).

Residues T51, 99–100 (RH), and 132–133 (SA) each bind phosphate. M234 lines the substrate pocket. S235 is a binding site for phosphate. 258–260 (DYD) lines the substrate pocket.

This sequence belongs to the PNP/MTAP phosphorylase family. MTAP subfamily. As to quaternary structure, homotrimer.

It is found in the cytoplasm. The protein resides in the nucleus. The enzyme catalyses S-methyl-5'-thioadenosine + phosphate = 5-(methylsulfanyl)-alpha-D-ribose 1-phosphate + adenine. It functions in the pathway amino-acid biosynthesis; L-methionine biosynthesis via salvage pathway; S-methyl-5-thio-alpha-D-ribose 1-phosphate from S-methyl-5'-thioadenosine (phosphorylase route): step 1/1. In terms of biological role, catalyzes the reversible phosphorylation of S-methyl-5'-thioadenosine (MTA) to adenine and 5-methylthioribose-1-phosphate. Involved in the breakdown of MTA, a major by-product of polyamine biosynthesis. Responsible for the first step in the methionine salvage pathway after MTA has been generated from S-adenosylmethionine. Has broad substrate specificity with 6-aminopurine nucleosides as preferred substrates. The polypeptide is S-methyl-5'-thioadenosine phosphorylase (Aspergillus fumigatus (strain ATCC MYA-4609 / CBS 101355 / FGSC A1100 / Af293) (Neosartorya fumigata)).